Reading from the N-terminus, the 212-residue chain is Imidazole glycerol phosphate synthase subunit HisH 2 (212 aa).

The Glutamine amidotransferase type-1 domain occupies 3–212; that stretch reads RVAIIDYGIN…LMSNFLQWNP (210 aa). Cys-82 (nucleophile) is an active-site residue. Catalysis depends on residues His-192 and Glu-194.

Heterodimer of HisH and HisF.

The protein localises to the cytoplasm. The catalysed reaction is 5-[(5-phospho-1-deoxy-D-ribulos-1-ylimino)methylamino]-1-(5-phospho-beta-D-ribosyl)imidazole-4-carboxamide + L-glutamine = D-erythro-1-(imidazol-4-yl)glycerol 3-phosphate + 5-amino-1-(5-phospho-beta-D-ribosyl)imidazole-4-carboxamide + L-glutamate + H(+). It carries out the reaction L-glutamine + H2O = L-glutamate + NH4(+). Its pathway is amino-acid biosynthesis; L-histidine biosynthesis; L-histidine from 5-phospho-alpha-D-ribose 1-diphosphate: step 5/9. Functionally, IGPS catalyzes the conversion of PRFAR and glutamine to IGP, AICAR and glutamate. The HisH subunit provides the glutamine amidotransferase activity that produces the ammonia necessary to HisF for the synthesis of IGP and AICAR. The chain is Imidazole glycerol phosphate synthase subunit HisH 2 from Nitrobacter winogradskyi (strain ATCC 25391 / DSM 10237 / CIP 104748 / NCIMB 11846 / Nb-255).